Reading from the N-terminus, the 754-residue chain is 5-methyltetrahydropteroyltriglutamate--homocysteine methyltransferase (754 aa).

Residues 17-20 and lysine 117 each bind 5-methyltetrahydropteroyltri-L-glutamate; that span reads RELK. L-homocysteine contacts are provided by residues 431 to 433 and glutamate 484; that span reads IGS. Residues 431-433 and glutamate 484 contribute to the L-methionine site; that span reads IGS. 5-methyltetrahydropteroyltri-L-glutamate is bound by residues 515–516 and tryptophan 561; that span reads RC. Aspartate 599 serves as a coordination point for L-homocysteine. Residue aspartate 599 coordinates L-methionine. Glutamate 605 lines the 5-methyltetrahydropteroyltri-L-glutamate pocket. Zn(2+) is bound by residues histidine 641, cysteine 643, and glutamate 665. Histidine 694 functions as the Proton donor in the catalytic mechanism. Zn(2+) is bound at residue cysteine 726.

Belongs to the vitamin-B12 independent methionine synthase family. Requires Zn(2+) as cofactor.

The enzyme catalyses 5-methyltetrahydropteroyltri-L-glutamate + L-homocysteine = tetrahydropteroyltri-L-glutamate + L-methionine. The protein operates within amino-acid biosynthesis; L-methionine biosynthesis via de novo pathway; L-methionine from L-homocysteine (MetE route): step 1/1. Its function is as follows. Catalyzes the transfer of a methyl group from 5-methyltetrahydrofolate to homocysteine resulting in methionine formation. This Salmonella dublin (strain CT_02021853) protein is 5-methyltetrahydropteroyltriglutamate--homocysteine methyltransferase.